The primary structure comprises 1495 residues: Ras GTPase-activating-like protein IQG1 (1495 aa).

A Calponin-homology (CH) domain is found at 108 to 221 (LCRVSEVKIW…ILISMINKKW (114 aa)). Residue Thr264 is modified to Phosphothreonine. Ser268 is modified (phosphoserine). Thr299 carries the phosphothreonine modification. IQ domains lie at 447–467 (EQDILRFQACLRGNKFRVLSS), 538–567 (SHYPLTKLQSYMRASYVRKKVMSLNTKLND), 568–597 (ERESIMKFSAIIRGNVVRCSEDAILSAVHD), 599–628 (HKENISKLQSLIRGIFTRSCLASIIYSLGK), 629–658 (ENCNIIQLSACIRGNAVRHKVQSLFAPENN), 687–716 (EYNNLALFQAFSRGALVRESLDQKSSFYKR), and 717–746 (NVRSVIMIQSWIRKSLQRSAYLELLDCPNP). Positions 759–798 (NGTATIEEVQNQLESCQASLDSENMKKERLLKSIRQQLNI) form a coiled coil. The region spanning 876-1100 (SYFTRFVCEM…PHIKDVLYNV (225 aa)) is the Ras-GAP domain.

Interacts with AFR1. Interacts with AKR1. Interacts with activated CDC42. Interacts with calmodulin CMD1. Interacts with myosin MYO1 and its light chain MLC1. Interacts with BUD4. Interacts with INN1. Interacts with SEC3. Interacts with TEM1.

The protein localises to the bud neck. Its function is as follows. Required for the assembly and the contraction of the actomyosin ring at the bud neck during cytokinesis. Seems to be involved in additional tasks during cell division like axial bud-site selection and targeted secretion by recruiting the spatial landmark BUD4, the septin CDC12 and the secretion landmark SEC3 to the bud neck. May be regulated by calcium ions. The sequence is that of Ras GTPase-activating-like protein IQG1 (IQG1) from Saccharomyces cerevisiae (strain ATCC 204508 / S288c) (Baker's yeast).